The following is a 323-amino-acid chain: Serine/threonine-protein phosphatase PP1-gamma catalytic subunit (323 aa).

An N-acetylalanine modification is found at A2. Positions 64, 66, 92, and 124 each coordinate Mn(2+). The active-site Proton donor is the H125. Positions 173 and 248 each coordinate Mn(2+). The disordered stretch occupies residues 302-323; that stretch reads KKPNATRPVTPPRGMITKQAKK. Residues T307 and T311 each carry the phosphothreonine modification.

Belongs to the PPP phosphatase family. PP-1 subfamily. As to quaternary structure, PP1 comprises a catalytic subunit, PPP1CA, PPP1CB or PPP1CC, which is folded into its native form by inhibitor 2 and glycogen synthetase kinase 3, and then complexed to one or several targeting or regulatory subunits. PPP1R12A, PPP1R12B and PPP1R12C mediate binding to myosin. PPP1R3A (in skeletal muscle), PPP1R3B (in liver), PPP1R3C, PPP1R3D and PPP1R3F (in brain) mediate binding to glycogen. Interacts with cyanobacterial toxin microcystin; disulfide-linked. Interacts with PPP1R3B and PPP1R7. Isoform 2 interacts with SPZ1. Interacts with CDCA2. PPP1R15A and PPP1R15B mediate binding to EIF2S1. Part of a complex containing PPP1R15B, PP1 and NCK1/2. Interacts with IKFZ1; the interaction targets PPP1CC to pericentromeric heterochromatin, dephosphorylates IKAROS, stabilizes it and prevents it from degradation. Interacts with PPP1R42; the interaction is direct. Interacts with NOM1 and PPP1R8. Component of the PTW/PP1 phosphatase complex, composed of PPP1R10/PNUTS, TOX4, WDR82, and PPP1CA or PPP1CB or PPP1CC. Interacts with PPP1R8. Interacts with isoform 1 and isoform 4 NEK2. Interacts with URI1; the interaction is phosphorylation-dependent and occurs in a growth factor-dependent manner. Interacts with FOXP3. Interacts with TMEM225 (via RVxF motif). Interacts with MKI67. Interacts with RRP1B; this targets PPP1CC to the nucleolus. Interacts with PPP1R2B. Found in a complex with PPP1CA, PPP1CC, SHC1 and PEAK1. Interacts with DYNLT4. Interacts (via RVxF motif) with FIRRM; regulates PLK1 kinase activity. Interacts with the KNL1 complex subunit KNL1; the interaction is direct and mutually exclusive with KNL1 binding to microtubules. Component of the SHOC2-MRAS-PP1c (SMP) complex consisting of SHOC2, GTP-bound M-Ras/MRAS and the catalytic subunit of protein phosphatase 1 (either PPP1CA, PPP1CB or PPP1CC). SHOC2 and PP1c preferably bind M-Ras/MRAS, but they also bind K-Ras/KRAS, N-Ras/NRAS and H-Ras/HRAS; these interactions are GTP-dependent and both SHOC2 and PP1c are required to form a stable complex. Interacts with SHOC2 in the absence of Ras GTPases. The cofactor is Mn(2+). Post-translationally, phosphorylated by NEK2.

Its subcellular location is the cytoplasm. The protein resides in the nucleus. It is found in the nucleolus. The protein localises to the nucleoplasm. It localises to the nucleus speckle. Its subcellular location is the chromosome. The protein resides in the centromere. It is found in the kinetochore. The protein localises to the cleavage furrow. It localises to the midbody. Its subcellular location is the mitochondrion. The protein resides in the cytoskeleton. It is found in the microtubule organizing center. The enzyme catalyses O-phospho-L-seryl-[protein] + H2O = L-seryl-[protein] + phosphate. It carries out the reaction O-phospho-L-threonyl-[protein] + H2O = L-threonyl-[protein] + phosphate. With respect to regulation, inactivated by binding to URI1. The phosphatase activity of the PPP1R15A-PP1 complex toward EIF2S1 is specifically inhibited by Salubrinal, a drug that protects cells from endoplasmic reticulum stress. In terms of biological role, protein phosphatase that associates with over 200 regulatory proteins to form highly specific holoenzymes which dephosphorylate hundreds of biological targets. Protein phosphatase 1 (PP1) is essential for cell division, and participates in the regulation of glycogen metabolism, muscle contractility and protein synthesis. Dephosphorylates RPS6KB1. Involved in regulation of ionic conductances and long-term synaptic plasticity. May play an important role in dephosphorylating substrates such as the postsynaptic density-associated Ca(2+)/calmodulin dependent protein kinase II. Component of the PTW/PP1 phosphatase complex, which plays a role in the control of chromatin structure and cell cycle progression during the transition from mitosis into interphase. In balance with CSNK1D and CSNK1E, determines the circadian period length, through the regulation of the speed and rhythmicity of PER1 and PER2 phosphorylation. May dephosphorylate CSNK1D and CSNK1E. Regulates the recruitment of the SKA complex to kinetochores. Dephosphorylates the 'Ser-418' residue of FOXP3 in regulatory T-cells (Treg) from patients with rheumatoid arthritis, thereby inactivating FOXP3 and rendering Treg cells functionally defective. Together with PPP1CA (PP1-alpha subunit), dephosphorylates IFIH1/MDA5 and RIG-I leading to their activation and a functional innate immune response. Core component of the SHOC2-MRAS-PP1c (SMP) holophosphatase complex that regulates the MAPK pathway activation. The SMP complex specifically dephosphorylates the inhibitory phosphorylation at 'Ser-259' of RAF1 kinase, 'Ser-365' of BRAF kinase and 'Ser-214' of ARAF kinase, stimulating their kinase activities. Dephosphorylates MKI67 at the onset of anaphase. The SMP complex enhances the dephosphorylation activity and substrate specificity of PP1c. In Homo sapiens (Human), this protein is Serine/threonine-protein phosphatase PP1-gamma catalytic subunit (PPP1CC).